The sequence spans 301 residues: DNA repair protein RecO (301 aa).

Residues 272-301 (PTPSGQGSPVAAAAFSEEDSETLGSNLKKL) are disordered.

The protein belongs to the RecO family.

Its function is as follows. Involved in DNA repair and RecF pathway recombination. This Synechococcus sp. (strain JA-3-3Ab) (Cyanobacteria bacterium Yellowstone A-Prime) protein is DNA repair protein RecO.